Here is a 1129-residue protein sequence, read N- to C-terminus: Phytochrome A type 4 (1129 aa).

Over residues 1-21 (MSSSRPASSSSSRNRQSSRAR) the composition is skewed to low complexity. A disordered region spans residues 1 to 24 (MSSSRPASSSSSRNRQSSRARVLA). The GAF domain occupies 217–402 (SMEVLCNTVV…VFAVHVNREF (186 aa)). C322 contributes to the phytochromobilin binding site. 2 consecutive PAS domains span residues 618 to 688 (VTSE…LQGK) and 748 to 822 (VEGD…VSLC). A Histidine kinase domain is found at 902–1122 (YMRHAINNPL…TFILTAELAS (221 aa)).

Belongs to the phytochrome family. Homodimer. In terms of processing, contains one covalently linked phytochromobilin chromophore.

Functionally, regulatory photoreceptor which exists in two forms that are reversibly interconvertible by light: the Pr form that absorbs maximally in the red region of the spectrum and the Pfr form that absorbs maximally in the far-red region. Photoconversion of Pr to Pfr induces an array of morphogenic responses, whereas reconversion of Pfr to Pr cancels the induction of those responses. Pfr controls the expression of a number of nuclear genes including those encoding the small subunit of ribulose-bisphosphate carboxylase, chlorophyll A/B binding protein, protochlorophyllide reductase, rRNA, etc. It also controls the expression of its own gene(s) in a negative feedback fashion. The sequence is that of Phytochrome A type 4 (PHYA4) from Avena sativa (Oat).